The sequence spans 103 residues: Large ribosomal subunit protein bL21 (103 aa).

This sequence belongs to the bacterial ribosomal protein bL21 family. In terms of assembly, part of the 50S ribosomal subunit. Contacts protein L20.

This protein binds to 23S rRNA in the presence of protein L20. This chain is Large ribosomal subunit protein bL21, found in Salmonella schwarzengrund (strain CVM19633).